A 294-amino-acid chain; its full sequence is MNGVINIYKNTGMTSFDVVAIVRRVAKMKKVGHTGTLDPAASGVLPVCLGKATKIIDYIMENKKVYRVNLKLGMVTDTYDLEGEVLREEDASHITKDEILNCINSFLGTIDQVPPMYSALKQNGVRLYELARQGIEVHREARKITIYSIENIKIESNDNIQMDVCCSKGTYIRSLCYDIGEKLNVGATMTALERIQNGTFTKEEAINIEDLTEELLEKHIISIEKALDSFEKITVNEKFGKLLRNGVKVFDNRMYSEEVEFNKLYRVYEDNGVFLGLGKRDEKGFKLEKLLIEE.

Asp38 functions as the Nucleophile in the catalytic mechanism.

It belongs to the pseudouridine synthase TruB family. Type 1 subfamily.

It carries out the reaction uridine(55) in tRNA = pseudouridine(55) in tRNA. Responsible for synthesis of pseudouridine from uracil-55 in the psi GC loop of transfer RNAs. The chain is tRNA pseudouridine synthase B from Clostridium perfringens (strain ATCC 13124 / DSM 756 / JCM 1290 / NCIMB 6125 / NCTC 8237 / Type A).